We begin with the raw amino-acid sequence, 294 residues long: Dolichol-phosphate mannosyltransferase (294 aa).

Positions 1–27 (MSIALDMDASAKMRKQPGSSGWSTSST) are disordered. Residues 1–263 (MSIALDMDAS…QQLVELYRFR (263 aa)) lie on the Cytoplasmic side of the membrane. Positions 17–27 (PGSSGWSTSST) are enriched in low complexity. Positions 35, 39, 70, 72, 123, 124, 125, 127, 151, 211, 237, and 243 each coordinate GDP-alpha-D-mannose. Mg(2+) contacts are provided by Asp125 and Gln127. Mn(2+) is bound by residues Asp125 and Gln127. The helical transmembrane segment at 264–284 (FGTVPIVFVLIVLLVLALYIW) threads the bilayer. Topologically, residues 285-294 (SHVLAPMLGA) are lumenal.

This sequence belongs to the glycosyltransferase 2 family. Mg(2+) is required as a cofactor. The cofactor is Mn(2+). Ca(2+) serves as cofactor.

Its subcellular location is the endoplasmic reticulum membrane. The enzyme catalyses a di-trans,poly-cis-dolichyl phosphate + GDP-alpha-D-mannose = a di-trans,poly-cis-dolichyl beta-D-mannosyl phosphate + GDP. Its pathway is protein modification; protein glycosylation. In terms of biological role, transfers mannose from GDP-mannose to dolichol monophosphate to form dolichol phosphate mannose (Dol-P-Man) which is the mannosyl donor in pathways leading to N-glycosylation, glycosyl phosphatidylinositol membrane anchoring, and O-mannosylation of proteins. The polypeptide is Dolichol-phosphate mannosyltransferase (DPM1) (Mycosarcoma maydis (Corn smut fungus)).